A 619-amino-acid chain; its full sequence is DNA mismatch repair protein MutL (619 aa).

The segment at 358-401 is disordered; it reads GGNQFARPSEAREAATRFSITSSREPAASGGSSGGASWPHAQPG.

The protein belongs to the DNA mismatch repair MutL/HexB family.

In terms of biological role, this protein is involved in the repair of mismatches in DNA. It is required for dam-dependent methyl-directed DNA mismatch repair. May act as a 'molecular matchmaker', a protein that promotes the formation of a stable complex between two or more DNA-binding proteins in an ATP-dependent manner without itself being part of a final effector complex. The chain is DNA mismatch repair protein MutL from Klebsiella pneumoniae (strain 342).